Consider the following 313-residue polypeptide: Ribosomal RNA small subunit methyltransferase H (313 aa).

S-adenosyl-L-methionine contacts are provided by residues 35 to 37 (GGH), aspartate 55, phenylalanine 80, aspartate 102, and glutamine 109.

Belongs to the methyltransferase superfamily. RsmH family.

It is found in the cytoplasm. It catalyses the reaction cytidine(1402) in 16S rRNA + S-adenosyl-L-methionine = N(4)-methylcytidine(1402) in 16S rRNA + S-adenosyl-L-homocysteine + H(+). In terms of biological role, specifically methylates the N4 position of cytidine in position 1402 (C1402) of 16S rRNA. The chain is Ribosomal RNA small subunit methyltransferase H from Shewanella amazonensis (strain ATCC BAA-1098 / SB2B).